The chain runs to 112 residues: Putative pterin-4-alpha-carbinolamine dehydratase (112 aa).

Belongs to the pterin-4-alpha-carbinolamine dehydratase family.

The enzyme catalyses (4aS,6R)-4a-hydroxy-L-erythro-5,6,7,8-tetrahydrobiopterin = (6R)-L-erythro-6,7-dihydrobiopterin + H2O. This is Putative pterin-4-alpha-carbinolamine dehydratase from Vibrio campbellii (strain ATCC BAA-1116).